A 205-amino-acid chain; its full sequence is Small ribosomal subunit protein uS4 (205 aa).

Positions 20-46 are disordered; it reads WGRSKSPVNRREYGPGQHGQRRKGKLS. The S4 RNA-binding domain occupies 94–157; sequence RRLDAVVYRA…RQLTLVLEAS (64 aa).

This sequence belongs to the universal ribosomal protein uS4 family. Part of the 30S ribosomal subunit. Contacts protein S5. The interaction surface between S4 and S5 is involved in control of translational fidelity.

Functionally, one of the primary rRNA binding proteins, it binds directly to 16S rRNA where it nucleates assembly of the body of the 30S subunit. In terms of biological role, with S5 and S12 plays an important role in translational accuracy. This is Small ribosomal subunit protein uS4 from Beijerinckia indica subsp. indica (strain ATCC 9039 / DSM 1715 / NCIMB 8712).